Reading from the N-terminus, the 118-residue chain is NADH-quinone oxidoreductase subunit A 2 (118 aa).

Transmembrane regions (helical) follow at residues 5–25, 60–80, and 87–107; these read YLPI…SLVF, FYII…LYPW, and LGMF…VGYI.

This sequence belongs to the complex I subunit 3 family. As to quaternary structure, NDH-1 is composed of 14 different subunits. Subunits NuoA, H, J, K, L, M, N constitute the membrane sector of the complex.

It localises to the cell inner membrane. It carries out the reaction a quinone + NADH + 5 H(+)(in) = a quinol + NAD(+) + 4 H(+)(out). Its function is as follows. NDH-1 shuttles electrons from NADH, via FMN and iron-sulfur (Fe-S) centers, to quinones in the respiratory chain. The immediate electron acceptor for the enzyme in this species is believed to be ubiquinone. Couples the redox reaction to proton translocation (for every two electrons transferred, four hydrogen ions are translocated across the cytoplasmic membrane), and thus conserves the redox energy in a proton gradient. The protein is NADH-quinone oxidoreductase subunit A 2 of Geobacter metallireducens (strain ATCC 53774 / DSM 7210 / GS-15).